A 200-amino-acid polypeptide reads, in one-letter code: Rho GDP-dissociation inhibitor 2 (200 aa).

The segment at 1-40 (MTEKAPEPHVEEDDDELDGKLNYKPPPQKSLKELQEMDKD) is disordered. N-acetylthreonine is present on Thr-2. At Lys-20 the chain carries N6-acetyllysine. At Tyr-23 the chain carries Phosphotyrosine. Lys-24, Lys-39, Lys-46, Lys-101, and Lys-123 each carry N6-acetyllysine. Residues 30–40 (SLKELQEMDKD) are compositionally biased toward basic and acidic residues. At Ser-144 the chain carries Phosphoserine. N6-acetyllysine is present on Lys-174.

This sequence belongs to the Rho GDI family. In terms of assembly, interacts with RHOA. Interacts with RAC1. Interacts with RAC2. Interacts with CDC42.

It is found in the cytoplasm. The protein resides in the cytosol. Regulates the GDP/GTP exchange reaction of the Rho proteins by inhibiting the dissociation of GDP from them, and the subsequent binding of GTP to them. Regulates reorganization of the actin cytoskeleton mediated by Rho family members. The chain is Rho GDP-dissociation inhibitor 2 (ARHGDIB) from Bos taurus (Bovine).